A 290-amino-acid chain; its full sequence is 4-hydroxy-tetrahydrodipicolinate synthase (290 aa).

T45 provides a ligand contact to pyruvate. Y133 (proton donor/acceptor) is an active-site residue. K161 serves as the catalytic Schiff-base intermediate with substrate. I202 contacts pyruvate.

The protein belongs to the DapA family. As to quaternary structure, homotetramer; dimer of dimers.

It localises to the cytoplasm. The enzyme catalyses L-aspartate 4-semialdehyde + pyruvate = (2S,4S)-4-hydroxy-2,3,4,5-tetrahydrodipicolinate + H2O + H(+). It participates in amino-acid biosynthesis; L-lysine biosynthesis via DAP pathway; (S)-tetrahydrodipicolinate from L-aspartate: step 3/4. In terms of biological role, catalyzes the condensation of (S)-aspartate-beta-semialdehyde [(S)-ASA] and pyruvate to 4-hydroxy-tetrahydrodipicolinate (HTPA). The chain is 4-hydroxy-tetrahydrodipicolinate synthase from Alkalilimnicola ehrlichii (strain ATCC BAA-1101 / DSM 17681 / MLHE-1).